We begin with the raw amino-acid sequence, 532 residues long: [Pyruvate dehydrogenase [acetyl-transferring]]-phosphatase 2, mitochondrial (532 aa).

The N-terminal 69 residues, 1 to 69 (MSSTVSYWIF…FALRKAYRHT (69 aa)), are a transit peptide targeting the mitochondrion. Positions 107–518 (NSVLRFESNQ…YRDDITVMVV (412 aa)) constitute a PPM-type phosphatase domain. Aspartate 144, glycine 145, aspartate 415, and aspartate 511 together coordinate Mn(2+).

The protein belongs to the PP2C family. Mg(2+) is required as a cofactor.

Its subcellular location is the mitochondrion. It carries out the reaction O-phospho-L-seryl-[pyruvate dehydrogenase E1 alpha subunit] + H2O = L-seryl-[pyruvate dehydrogenase E1 alpha subunit] + phosphate. Mitochondrial enzyme that catalyzes the dephosphorylation and concomitant reactivation of the alpha subunit of the E1 component of the pyruvate dehydrogenase complex (PDC), thereby stimulating the conversion of pyruvate into acetyl-CoA. Acts as a crucial regulator of T cell metabolism and function, with a particular focus on T-helper Th17. This Mus musculus (Mouse) protein is [Pyruvate dehydrogenase [acetyl-transferring]]-phosphatase 2, mitochondrial (Pdp2).